The chain runs to 247 residues: Probable transcriptional regulatory protein BHWA1_01533 (247 aa).

The segment at 1–22 (MSGHSKWASIKHKKAANDSKKG) is disordered.

Belongs to the TACO1 family.

It localises to the cytoplasm. This Brachyspira hyodysenteriae (strain ATCC 49526 / WA1) protein is Probable transcriptional regulatory protein BHWA1_01533.